The following is a 368-amino-acid chain: tRNA 2-selenouridine synthase (368 aa).

A Rhodanese domain is found at 15-138 (MLSGHPMIDV…MRQYLIEVID (124 aa)). The active-site S-selanylcysteine intermediate is Cys98.

The protein belongs to the SelU family. In terms of assembly, monomer.

It carries out the reaction 5-methylaminomethyl-2-thiouridine(34) in tRNA + selenophosphate + (2E)-geranyl diphosphate + H2O + H(+) = 5-methylaminomethyl-2-selenouridine(34) in tRNA + (2E)-thiogeraniol + phosphate + diphosphate. It catalyses the reaction 5-methylaminomethyl-2-thiouridine(34) in tRNA + (2E)-geranyl diphosphate = 5-methylaminomethyl-S-(2E)-geranyl-thiouridine(34) in tRNA + diphosphate. The catalysed reaction is 5-methylaminomethyl-S-(2E)-geranyl-thiouridine(34) in tRNA + selenophosphate + H(+) = 5-methylaminomethyl-2-(Se-phospho)selenouridine(34) in tRNA + (2E)-thiogeraniol. The enzyme catalyses 5-methylaminomethyl-2-(Se-phospho)selenouridine(34) in tRNA + H2O = 5-methylaminomethyl-2-selenouridine(34) in tRNA + phosphate. Functionally, involved in the post-transcriptional modification of the uridine at the wobble position (U34) of tRNA(Lys), tRNA(Glu) and tRNA(Gln). Catalyzes the conversion of 2-thiouridine (S2U-RNA) to 2-selenouridine (Se2U-RNA). Acts in a two-step process involving geranylation of 2-thiouridine (S2U) to S-geranyl-2-thiouridine (geS2U) and subsequent selenation of the latter derivative to 2-selenouridine (Se2U) in the tRNA chain. This is tRNA 2-selenouridine synthase from Shewanella woodyi (strain ATCC 51908 / MS32).